The sequence spans 182 residues: Succinate dehydrogenase cytochrome b560 subunit, mitochondrial (182 aa).

The helical transmembrane segment at 65–94 (LTWMLSGFHRISGCVMAGTLLVGGIGFAVL) threads the bilayer. Topologically, residues 95–114 (PFDFTAFVDFIRSWNLPCAV) are mitochondrial intermembrane. The chain crosses the membrane as a helical span at residues 115–139 (TAVFKYIIAFPIIFHTLNGIRFLGF). Histidine 129 contributes to the heme binding site. Residues 140–147 (DLAKGVNN) are Mitochondrial matrix-facing. Residues 148–169 (VGQIYKSGYLVSGLSAILALAI) form a helical membrane-spanning segment. Residues 170–172 (VFN) lie on the Mitochondrial intermembrane side of the membrane.

It belongs to the cytochrome b560 family. In terms of assembly, component of complex II composed of four subunits: a flavoprotein (FP), iron-sulfur protein (IP), and a cytochrome b560 composed of two integral membrane proteins. Requires heme as cofactor.

The protein localises to the mitochondrion inner membrane. Its pathway is carbohydrate metabolism; tricarboxylic acid cycle. In terms of biological role, membrane-anchoring subunit of succinate dehydrogenase (SDH) that is involved in complex II of the mitochondrial electron transport chain and is responsible for transferring electrons from succinate to ubiquinone (coenzyme Q). Mediates resistance to enteropathogenic E.coli infection. This Caenorhabditis elegans protein is Succinate dehydrogenase cytochrome b560 subunit, mitochondrial (mev-1).